The following is a 186-amino-acid chain: Holliday junction branch migration complex subunit RuvA (186 aa).

A domain I region spans residues 1 to 63 (MNDYINGFLY…DNHFKYYGFF (63 aa)). Residues 64–137 (NQLVRDLFEI…QKELFNNKIS (74 aa)) form a domain II region. S137 is a region of interest (flexible linker). The domain III stretch occupies residues 137–186 (SEKKNKVITSLEKLGYKTKDIYKIIINVDEDLTIDELTKYVLEKLSYINN).

Belongs to the RuvA family. In terms of assembly, homotetramer. Forms an RuvA(8)-RuvB(12)-Holliday junction (HJ) complex. HJ DNA is sandwiched between 2 RuvA tetramers; dsDNA enters through RuvA and exits via RuvB. An RuvB hexamer assembles on each DNA strand where it exits the tetramer. Each RuvB hexamer is contacted by two RuvA subunits (via domain III) on 2 adjacent RuvB subunits; this complex drives branch migration. In the full resolvosome a probable DNA-RuvA(4)-RuvB(12)-RuvC(2) complex forms which resolves the HJ.

It is found in the cytoplasm. Functionally, the RuvA-RuvB-RuvC complex processes Holliday junction (HJ) DNA during genetic recombination and DNA repair, while the RuvA-RuvB complex plays an important role in the rescue of blocked DNA replication forks via replication fork reversal (RFR). RuvA specifically binds to HJ cruciform DNA, conferring on it an open structure. The RuvB hexamer acts as an ATP-dependent pump, pulling dsDNA into and through the RuvAB complex. HJ branch migration allows RuvC to scan DNA until it finds its consensus sequence, where it cleaves and resolves the cruciform DNA. The polypeptide is Holliday junction branch migration complex subunit RuvA (Mycoplasma capricolum subsp. capricolum (strain California kid / ATCC 27343 / NCTC 10154)).